Reading from the N-terminus, the 279-residue chain is 2-dehydro-3-deoxyphosphooctonate aldolase (279 aa).

Belongs to the KdsA family.

The protein localises to the cytoplasm. The enzyme catalyses D-arabinose 5-phosphate + phosphoenolpyruvate + H2O = 3-deoxy-alpha-D-manno-2-octulosonate-8-phosphate + phosphate. Its pathway is carbohydrate biosynthesis; 3-deoxy-D-manno-octulosonate biosynthesis; 3-deoxy-D-manno-octulosonate from D-ribulose 5-phosphate: step 2/3. It functions in the pathway bacterial outer membrane biogenesis; lipopolysaccharide biosynthesis. This chain is 2-dehydro-3-deoxyphosphooctonate aldolase, found in Azoarcus sp. (strain BH72).